The primary structure comprises 123 residues: Protein Wnt-3b (123 aa).

Ser1 is lipidated: O-palmitoleoyl serine; by PORCN. Cys89 and Cys104 are disulfide-bonded. N-linked (GlcNAc...) asparagine glycosylation occurs at Asn90.

Belongs to the Wnt family. In terms of processing, palmitoleoylation is required for efficient binding to frizzled receptors. Depalmitoleoylation leads to Wnt signaling pathway inhibition.

The protein resides in the secreted. It localises to the extracellular space. Its subcellular location is the extracellular matrix. In terms of biological role, ligand for members of the frizzled family of seven transmembrane receptors. Probable developmental protein. May be a signaling molecule which affects the development of discrete regions of tissues. Is likely to signal over only few cell diameters. The protein is Protein Wnt-3b (WNT3B) of Meleagris gallopavo (Wild turkey).